Here is a 151-residue protein sequence, read N- to C-terminus: Large ribosomal subunit protein uL22 (151 aa).

Positions 1-18 (MARINYSINADPENTSKA) are enriched in polar residues. Residues 1–23 (MARINYSINADPENTSKAMGSEL) are disordered.

It belongs to the universal ribosomal protein uL22 family. Part of the 50S ribosomal subunit.

This protein binds specifically to 23S rRNA. It makes multiple contacts with different domains of the 23S rRNA in the assembled 50S subunit and ribosome. Functionally, the globular domain of the protein is located near the polypeptide exit tunnel on the outside of the subunit, while an extended beta-hairpin is found that lines the wall of the exit tunnel in the center of the 70S ribosome. This Methanosarcina mazei (strain ATCC BAA-159 / DSM 3647 / Goe1 / Go1 / JCM 11833 / OCM 88) (Methanosarcina frisia) protein is Large ribosomal subunit protein uL22.